Consider the following 395-residue polypeptide: NAD(P)H-quinone oxidoreductase subunit H, chloroplastic (395 aa).

This sequence belongs to the complex I 49 kDa subunit family. NDH is composed of at least 16 different subunits, 5 of which are encoded in the nucleus.

It localises to the plastid. It is found in the chloroplast thylakoid membrane. It catalyses the reaction a plastoquinone + NADH + (n+1) H(+)(in) = a plastoquinol + NAD(+) + n H(+)(out). The catalysed reaction is a plastoquinone + NADPH + (n+1) H(+)(in) = a plastoquinol + NADP(+) + n H(+)(out). Functionally, NDH shuttles electrons from NAD(P)H:plastoquinone, via FMN and iron-sulfur (Fe-S) centers, to quinones in the photosynthetic chain and possibly in a chloroplast respiratory chain. The immediate electron acceptor for the enzyme in this species is believed to be plastoquinone. Couples the redox reaction to proton translocation, and thus conserves the redox energy in a proton gradient. This is NAD(P)H-quinone oxidoreductase subunit H, chloroplastic from Coffea arabica (Arabian coffee).